The chain runs to 286 residues: ATP synthase gamma chain (286 aa).

It belongs to the ATPase gamma chain family. F-type ATPases have 2 components, CF(1) - the catalytic core - and CF(0) - the membrane proton channel. CF(1) has five subunits: alpha(3), beta(3), gamma(1), delta(1), epsilon(1). CF(0) has three main subunits: a, b and c.

It localises to the cell inner membrane. In terms of biological role, produces ATP from ADP in the presence of a proton gradient across the membrane. The gamma chain is believed to be important in regulating ATPase activity and the flow of protons through the CF(0) complex. The polypeptide is ATP synthase gamma chain (Shewanella denitrificans (strain OS217 / ATCC BAA-1090 / DSM 15013)).